A 627-amino-acid polypeptide reads, in one-letter code: F-box only protein 21 (627 aa).

Positions 27–76 (PSCLVQLPGEVLEYILCSGSLTALDIGRVSSTCRRLREVCQSSGQVWKEQ) constitute an F-box domain.

Directly interacts with SKP1 and CUL1.

Functionally, substrate-recognition component of the SCF (SKP1-CUL1-F-box protein)-type E3 ubiquitin ligase complex. The chain is F-box only protein 21 (Fbxo21) from Mus musculus (Mouse).